The primary structure comprises 316 residues: Glycerol-3-phosphate dehydrogenase [NAD(P)+] (316 aa).

Serine 14, phenylalanine 15, arginine 35, and lysine 109 together coordinate NADPH. Positions 109 and 137 each coordinate sn-glycerol 3-phosphate. An NADPH-binding site is contributed by alanine 141. The sn-glycerol 3-phosphate site is built by lysine 192, aspartate 248, serine 258, arginine 259, and asparagine 260. The Proton acceptor role is filled by lysine 192. Position 259 (arginine 259) interacts with NADPH. Residues leucine 283 and glutamate 285 each coordinate NADPH.

It belongs to the NAD-dependent glycerol-3-phosphate dehydrogenase family.

It localises to the cytoplasm. The enzyme catalyses sn-glycerol 3-phosphate + NAD(+) = dihydroxyacetone phosphate + NADH + H(+). The catalysed reaction is sn-glycerol 3-phosphate + NADP(+) = dihydroxyacetone phosphate + NADPH + H(+). It functions in the pathway membrane lipid metabolism; glycerophospholipid metabolism. Functionally, catalyzes the reduction of the glycolytic intermediate dihydroxyacetone phosphate (DHAP) to sn-glycerol 3-phosphate (G3P), the key precursor for phospholipid synthesis. This Rickettsia prowazekii (strain Madrid E) protein is Glycerol-3-phosphate dehydrogenase [NAD(P)+].